The sequence spans 66 residues: Large ribosomal subunit protein bL28 (66 aa).

The interval 1 to 26 is disordered; the sequence is MAKDAITGARTRFGNQRSHALNSSRR. Positions 13–25 are enriched in polar residues; that stretch reads FGNQRSHALNSSR.

This sequence belongs to the bacterial ribosomal protein bL28 family.

This chain is Large ribosomal subunit protein bL28, found in Leuconostoc citreum (strain KM20).